Reading from the N-terminus, the 1357-residue chain is DNA-directed RNA polymerase subunit beta (1357 aa).

Belongs to the RNA polymerase beta chain family. The RNAP catalytic core consists of 2 alpha, 1 beta, 1 beta' and 1 omega subunit. When a sigma factor is associated with the core the holoenzyme is formed, which can initiate transcription.

It catalyses the reaction RNA(n) + a ribonucleoside 5'-triphosphate = RNA(n+1) + diphosphate. Functionally, DNA-dependent RNA polymerase catalyzes the transcription of DNA into RNA using the four ribonucleoside triphosphates as substrates. The sequence is that of DNA-directed RNA polymerase subunit beta from Pseudomonas syringae pv. tomato (strain ATCC BAA-871 / DC3000).